Reading from the N-terminus, the 286-residue chain is 4-diphosphocytidyl-2-C-methyl-D-erythritol kinase (286 aa).

The active site involves lysine 12. Residue 96–106 (PHGAGLGGGSA) coordinates ATP. Aspartate 138 is an active-site residue.

It belongs to the GHMP kinase family. IspE subfamily.

The enzyme catalyses 4-CDP-2-C-methyl-D-erythritol + ATP = 4-CDP-2-C-methyl-D-erythritol 2-phosphate + ADP + H(+). It participates in isoprenoid biosynthesis; isopentenyl diphosphate biosynthesis via DXP pathway; isopentenyl diphosphate from 1-deoxy-D-xylulose 5-phosphate: step 3/6. Its function is as follows. Catalyzes the phosphorylation of the position 2 hydroxy group of 4-diphosphocytidyl-2C-methyl-D-erythritol. The chain is 4-diphosphocytidyl-2-C-methyl-D-erythritol kinase from Nitratidesulfovibrio vulgaris (strain ATCC 29579 / DSM 644 / CCUG 34227 / NCIMB 8303 / VKM B-1760 / Hildenborough) (Desulfovibrio vulgaris).